An 87-amino-acid chain; its full sequence is Small ribosomal subunit protein uS15c (87 aa).

This sequence belongs to the universal ribosomal protein uS15 family. Part of the 30S ribosomal subunit.

It localises to the plastid. The protein localises to the chloroplast. This is Small ribosomal subunit protein uS15c (rps15) from Oenothera glazioviana (Large-flowered evening primrose).